The chain runs to 238 residues: Aspartate/glutamate leucyltransferase (238 aa).

The protein belongs to the R-transferase family. Bpt subfamily.

Its subcellular location is the cytoplasm. The catalysed reaction is N-terminal L-glutamyl-[protein] + L-leucyl-tRNA(Leu) = N-terminal L-leucyl-L-glutamyl-[protein] + tRNA(Leu) + H(+). It catalyses the reaction N-terminal L-aspartyl-[protein] + L-leucyl-tRNA(Leu) = N-terminal L-leucyl-L-aspartyl-[protein] + tRNA(Leu) + H(+). Its function is as follows. Functions in the N-end rule pathway of protein degradation where it conjugates Leu from its aminoacyl-tRNA to the N-termini of proteins containing an N-terminal aspartate or glutamate. The sequence is that of Aspartate/glutamate leucyltransferase from Shewanella sp. (strain MR-4).